The following is a 369-amino-acid chain: S-(hydroxymethyl)glutathione dehydrogenase (369 aa).

7 residues coordinate Zn(2+): Cys-40, His-62, Cys-92, Cys-95, Cys-98, Cys-106, and Cys-169.

The protein belongs to the zinc-containing alcohol dehydrogenase family. Class-III subfamily. Homodimer. Zn(2+) serves as cofactor.

The protein resides in the cytoplasm. It catalyses the reaction S-(hydroxymethyl)glutathione + NADP(+) = S-formylglutathione + NADPH + H(+). It carries out the reaction S-(hydroxymethyl)glutathione + NAD(+) = S-formylglutathione + NADH + H(+). The catalysed reaction is a primary alcohol + NAD(+) = an aldehyde + NADH + H(+). The enzyme catalyses a secondary alcohol + NAD(+) = a ketone + NADH + H(+). It catalyses the reaction S-nitrosoglutathione + NADH + H(+) = S-(hydroxysulfenamide)glutathione + NAD(+). Its function is as follows. Has high formaldehyde dehydrogenase activity in the presence of glutathione and catalyzes the oxidation of normal alcohols in a reaction that is not GSH-dependent. In addition, hemithiolacetals other than those formed from GSH, including omega-thiol fatty acids, also are substrates. Also acts as a S-nitroso-glutathione reductase by catalyzing the NADH-dependent reduction of S-nitrosoglutathione. The chain is S-(hydroxymethyl)glutathione dehydrogenase (frmA) from Synechocystis sp. (strain ATCC 27184 / PCC 6803 / Kazusa).